The primary structure comprises 207 residues: Transcriptional regulatory protein RcsA (207 aa).

Residues Ile-131–Asp-196 enclose the HTH luxR-type domain. Positions Thr-155–Gly-174 form a DNA-binding region, H-T-H motif.

This sequence belongs to the RcsA family. In terms of assembly, interacts with RcsB.

Component of the Rcs signaling system, which controls transcription of numerous genes. Binds, with RcsB, to the RcsAB box to regulate expression of genes. The chain is Transcriptional regulatory protein RcsA from Salmonella typhi.